The primary structure comprises 291 residues: Ribosomal RNA small subunit methyltransferase H (291 aa).

S-adenosyl-L-methionine contacts are provided by residues 31 to 33 (GGH), aspartate 50, phenylalanine 77, aspartate 98, and glutamine 105.

The protein belongs to the methyltransferase superfamily. RsmH family.

It is found in the cytoplasm. The catalysed reaction is cytidine(1402) in 16S rRNA + S-adenosyl-L-methionine = N(4)-methylcytidine(1402) in 16S rRNA + S-adenosyl-L-homocysteine + H(+). Specifically methylates the N4 position of cytidine in position 1402 (C1402) of 16S rRNA. The polypeptide is Ribosomal RNA small subunit methyltransferase H (Endomicrobium trichonymphae).